The primary structure comprises 224 residues: Cytidylate kinase (224 aa).

11-19 contacts ATP; it reads GPAAAGKST.

The protein belongs to the cytidylate kinase family. Type 1 subfamily.

The protein resides in the cytoplasm. The enzyme catalyses CMP + ATP = CDP + ADP. The catalysed reaction is dCMP + ATP = dCDP + ADP. This is Cytidylate kinase from Geobacillus kaustophilus (strain HTA426).